The following is a 187-amino-acid chain: NADH-quinone oxidoreductase subunit B (187 aa).

[4Fe-4S] cluster is bound by residues cysteine 46, cysteine 47, cysteine 112, and cysteine 141.

It belongs to the complex I 20 kDa subunit family. NDH-1 is composed of 14 different subunits. Subunits NuoB, C, D, E, F, and G constitute the peripheral sector of the complex. [4Fe-4S] cluster serves as cofactor.

Its subcellular location is the cell inner membrane. The catalysed reaction is a quinone + NADH + 5 H(+)(in) = a quinol + NAD(+) + 4 H(+)(out). NDH-1 shuttles electrons from NADH, via FMN and iron-sulfur (Fe-S) centers, to quinones in the respiratory chain. The immediate electron acceptor for the enzyme in this species is believed to be ubiquinone. Couples the redox reaction to proton translocation (for every two electrons transferred, four hydrogen ions are translocated across the cytoplasmic membrane), and thus conserves the redox energy in a proton gradient. The sequence is that of NADH-quinone oxidoreductase subunit B from Myxococcus xanthus (strain DK1622).